A 1798-amino-acid chain; its full sequence is DNA polymerase II large subunit (1798 aa).

A disordered region spans residues 286–309 (EKGKSSEENKDESKAEDTGTESVA). The DOD-type homing endonuclease domain occupies 1184–1319 (VVGYYLAEGY…ETLLLAKFGI (136 aa)). Positions 1699-1798 (TGHSNGKNGY…GISLDEFFGS (100 aa)) are disordered. Over residues 1714–1731 (GKNGKASKKSGSLASKLS) the composition is skewed to low complexity. Positions 1733–1753 (KGKEPSKKKESAKPKRSEKVK) are enriched in basic and acidic residues.

Belongs to the archaeal DNA polymerase II family. As to quaternary structure, heterodimer of a large subunit and a small subunit. Post-translationally, this protein undergoes a protein self splicing that involves a post-translational excision of the intervening region (intein) followed by peptide ligation.

The catalysed reaction is DNA(n) + a 2'-deoxyribonucleoside 5'-triphosphate = DNA(n+1) + diphosphate. The enzyme catalyses Exonucleolytic cleavage in the 3'- to 5'-direction to yield nucleoside 5'-phosphates.. In terms of biological role, possesses two activities: a DNA synthesis (polymerase) and an exonucleolytic activity that degrades single-stranded DNA in the 3'- to 5'-direction. Has a template-primer preference which is characteristic of a replicative DNA polymerase. This chain is DNA polymerase II large subunit (polC), found in Thermococcus kodakarensis (strain ATCC BAA-918 / JCM 12380 / KOD1) (Pyrococcus kodakaraensis (strain KOD1)).